The following is a 368-amino-acid chain: MKLFKLSIHGFRSHQDAVFLPHDGINLIYGKNGTGKTNLLEAIHYTCLTKSFLSTSDSDALHFQAGHFELEAVLQSDSENESKVRVYYSPAEGKHVFINKTPLESFSKIVGEFPCVALSPYDIALTQGSPQERRRFLDASISQTNKAYLADLLSYRRVLAQRNKLLADMKHRTFSSPELDVWTASLSALAASIIFRRIHFVRDFAQYLENAYADFQSIDETPGLTYKTELSLNENSFSEAELAKQISEKFEEMKFDELRRGLTLFGPHRDDLAFSINNLSLRKYASQGQHKTFVICLKLAQYFYICELLSEKPIFLLDDVFSELDSQRAEELVRILSSKRSGQSFITTTERKDFAEVKQHTIGGIISG.

Residue glycine 30–threonine 37 participates in ATP binding.

Belongs to the RecF family.

The protein resides in the cytoplasm. In terms of biological role, the RecF protein is involved in DNA metabolism; it is required for DNA replication and normal SOS inducibility. RecF binds preferentially to single-stranded, linear DNA. It also seems to bind ATP. This Chloroherpeton thalassium (strain ATCC 35110 / GB-78) protein is DNA replication and repair protein RecF.